The primary structure comprises 200 residues: TATA-box-binding protein 2 (200 aa).

2 tandem repeats follow at residues 25-101 and 115-192.

Belongs to the TBP family. In terms of assembly, belongs to the TFIID complex together with the TBP-associated factors (TAFs). Binds DNA as monomer. Interacts with TAF1 (via N-terminus). Interacts with TFIIB1. Interacts with PTF2. Interacts with HAT5/ATHB-1 and ATHB-7. Component of a nuclear protein complex containing at least TATA binding proteins (TBPs, e.g. TBP1 and TBP2) and ATX1.

It is found in the nucleus. General transcription factor (GTF) that functions at the core of the DNA-binding multiprotein factor TFIID. Binding of TFIID to the TATA box is the initial transcriptional step of the pre-initiation complex (PIC), playing a role in the activation of eukaryotic genes transcribed by RNA polymerase II. Interacts with TFIIB1 and is required for activated transcription and possibly basal transcription. May act as GTF of RNA polymerase I-dependent transcription and rRNA synthesis. Forms a ternary complex with PBRP1 and the rDNA promoter region. The polypeptide is TATA-box-binding protein 2 (Arabidopsis thaliana (Mouse-ear cress)).